Consider the following 491-residue polypeptide: Probable glycine dehydrogenase (decarboxylating) subunit 2 (491 aa).

Lysine 273 is subject to N6-(pyridoxal phosphate)lysine.

This sequence belongs to the GcvP family. C-terminal subunit subfamily. The glycine cleavage system is composed of four proteins: P, T, L and H. In this organism, the P 'protein' is a heterodimer of two subunits. It depends on pyridoxal 5'-phosphate as a cofactor.

The enzyme catalyses N(6)-[(R)-lipoyl]-L-lysyl-[glycine-cleavage complex H protein] + glycine + H(+) = N(6)-[(R)-S(8)-aminomethyldihydrolipoyl]-L-lysyl-[glycine-cleavage complex H protein] + CO2. Its function is as follows. The glycine cleavage system catalyzes the degradation of glycine. The P protein binds the alpha-amino group of glycine through its pyridoxal phosphate cofactor; CO(2) is released and the remaining methylamine moiety is then transferred to the lipoamide cofactor of the H protein. The chain is Probable glycine dehydrogenase (decarboxylating) subunit 2 from Bacillus velezensis (strain DSM 23117 / BGSC 10A6 / LMG 26770 / FZB42) (Bacillus amyloliquefaciens subsp. plantarum).